Here is a 347-residue protein sequence, read N- to C-terminus: tRNA N6-adenosine threonylcarbamoyltransferase (347 aa).

Positions 111 and 115 each coordinate Fe cation. Substrate contacts are provided by residues 134–138 (LVSGG), Asp-167, Gly-180, and Asn-277. Asp-305 provides a ligand contact to Fe cation.

The protein belongs to the KAE1 / TsaD family. Requires Fe(2+) as cofactor.

The protein localises to the cytoplasm. The enzyme catalyses L-threonylcarbamoyladenylate + adenosine(37) in tRNA = N(6)-L-threonylcarbamoyladenosine(37) in tRNA + AMP + H(+). Required for the formation of a threonylcarbamoyl group on adenosine at position 37 (t(6)A37) in tRNAs that read codons beginning with adenine. Is involved in the transfer of the threonylcarbamoyl moiety of threonylcarbamoyl-AMP (TC-AMP) to the N6 group of A37, together with TsaE and TsaB. TsaD likely plays a direct catalytic role in this reaction. The sequence is that of tRNA N6-adenosine threonylcarbamoyltransferase from Ralstonia pickettii (strain 12J).